Reading from the N-terminus, the 329-residue chain is Transcription factor TGA2.3 (329 aa).

Residues 1–48 are disordered; sequence MADMSPRTDTSTDDTDDNHMLEPGQLALAAASDSDRSKDKHEDQKTLR. A compositionally biased stretch (basic and acidic residues) spans 33 to 46; the sequence is DSDRSKDKHEDQKT. One can recognise a bZIP domain in the interval 43 to 87; sequence DQKTLRRLAQNREAARKSRLRKKAYVQQLENSRLKLTQLEQELQR. The basic motif stretch occupies residues 45–65; it reads KTLRRLAQNREAARKSRLRKK. The leucine-zipper stretch occupies residues 71–85; the sequence is LENSRLKLTQLEQEL. The DOG1 domain maps to 110 to 326; the sequence is ALAFDMEYAR…RALSSLWLAR (217 aa).

This sequence belongs to the bZIP family. As to quaternary structure, interacts with NPR1/NH1 and NPR3/NH3.

The protein localises to the nucleus. Its function is as follows. Transcriptional regulator involved in defense response. This chain is Transcription factor TGA2.3, found in Oryza sativa subsp. japonica (Rice).